Here is a 103-residue protein sequence, read N- to C-terminus: Preprofallaxidin-6 (103 aa).

Positions M1–C22 are cleaved as a signal peptide. A propeptide spanning residues E23 to R49 is cleaved from the precursor. Residues E24 to G50 form a disordered region. The segment covering G31–H41 has biased composition (acidic residues). L65 carries the post-translational modification Leucine amide. The tract at residues K67–K103 is disordered. Residues S69–R73 constitute a propeptide that is removed on maturation. The residue at position 77 (F77) is a Phenylalanine amide. Positions S81–R85 are excised as a propeptide. F89 bears the Phenylalanine amide mark. The propeptide occupies S93–R97. I101 is subject to Isoleucine amide.

The protein belongs to the frog skin active peptide (FSAP) family. Brevinin subfamily. As to expression, expressed by the skin glands.

The protein localises to the secreted. Functionally, fallaxidin-1.3 shows no antibacterial activity against Gram-positive or Gram-negative bacteria. Does not inhibit the formation of NO by neuronal nitric oxide synthase. Has no effect on splenocyte proliferation or smooth muscle contraction. Fallaxidin-1.4 shows no antibacterial activity against Gram-positive or Gram-negative bacteria. Does not inhibit the formation of NO by neuronal nitric oxide synthase. Has no effect on splenocyte proliferation or smooth muscle contraction. In terms of biological role, fallaxidin-3.1 shows antibacterial activity against the Gram-positive bacteria E.faecalis (MIC=100 uM) and L.lactis (MIC=100 uM). No antibacterial activity against the Gram-positive bacteria B.cereus, L.innocua, M.luteus, S.epidermidis, S.uberis and S.aureus, or the Gram-negative bacteria E.cloacae and E.coli. This is Preprofallaxidin-6 from Litoria fallax (Eastern dwarf tree frog).